We begin with the raw amino-acid sequence, 476 residues long: Nyctalopin (476 aa).

The N-terminal stretch at 1-18 (MLILLLHAVVFSLPYTRA) is a signal peptide. Residues 19 to 57 (TEACLRACPAACTCSHVERGCSVRCDRAGLQRVPQEFPC) enclose the LRRNT domain. LRR repeat units lie at residues 58 to 79 (EAAS…AFGT), 82 to 103 (SLRR…AFKG), 106 to 128 (RLAE…TFAA), 131 to 154 (RLRR…AELP), 155 to 177 (ALRE…RGLA), 178 to 199 (NLTH…SLLG), 202 to 223 (RLRS…AFGD), 226 to 247 (ALED…AFRG), 250 to 271 (RLRT…WFSD), 274 to 295 (ELEL…AFQN), and 298 to 319 (GLLA…AFQP). Residue asparagine 92 is glycosylated (N-linked (GlcNAc...) asparagine). N-linked (GlcNAc...) asparagine glycosylation occurs at asparagine 178. A glycan (N-linked (GlcNAc...) asparagine) is linked at asparagine 295. One can recognise an LRRCT domain in the interval 331–383 (NPWRCDCQLEWLRDWMEGSGRVADVACASPGSVAGQDLSQVVFERSSDGLCVD). N-linked (GlcNAc...) asparagine glycosylation is found at asparagine 388, asparagine 427, asparagine 434, and asparagine 438.

This sequence belongs to the small leucine-rich proteoglycan (SLRP) family. SLRP class IV subfamily. In terms of tissue distribution, expressed abundantly in retina with lower levels in brain, lung, spleen and testis. Not detected in kidney, heart or liver. In the retina, highest expression found in the inner nuclear layer and ganglion cell layer.

The protein resides in the secreted. Its subcellular location is the extracellular space. It is found in the extracellular matrix. This chain is Nyctalopin (Nyx), found in Mus musculus (Mouse).